A 188-amino-acid polypeptide reads, in one-letter code: Elongation factor P (188 aa).

The protein belongs to the elongation factor P family.

It localises to the cytoplasm. It participates in protein biosynthesis; polypeptide chain elongation. In terms of biological role, involved in peptide bond synthesis. Stimulates efficient translation and peptide-bond synthesis on native or reconstituted 70S ribosomes in vitro. Probably functions indirectly by altering the affinity of the ribosome for aminoacyl-tRNA, thus increasing their reactivity as acceptors for peptidyl transferase. The protein is Elongation factor P of Rickettsia typhi (strain ATCC VR-144 / Wilmington).